A 214-amino-acid chain; its full sequence is Large ribosomal subunit protein uL16 (214 aa).

Citrulline is present on arginine 32. Lysine 175 participates in a covalent cross-link: Glycyl lysine isopeptide (Lys-Gly) (interchain with G-Cter in SUMO2). Lysine 188 participates in a covalent cross-link: Glycyl lysine isopeptide (Lys-Gly) (interchain with G-Cter in ubiquitin).

Belongs to the universal ribosomal protein uL16 family. Component of the large ribosomal subunit. Mature ribosomes consist of a small (40S) and a large (60S) subunit. The 40S subunit contains about 33 different proteins and 1 molecule of RNA (18S). The 60S subunit contains about 49 different proteins and 3 molecules of RNA (28S, 5.8S and 5S). Post-translationally, citrullinated by PADI4. In terms of processing, ufmylated by UFL1.

The protein localises to the cytoplasm. In terms of biological role, component of the large ribosomal subunit. Plays a role in the formation of actively translating ribosomes. May play a role in the embryonic brain development. The sequence is that of Large ribosomal subunit protein uL16 from Pongo abelii (Sumatran orangutan).